Reading from the N-terminus, the 275-residue chain is Transmembrane protein 106B (275 aa).

The disordered stretch occupies residues Met1 to Thr24. Gly2 carries N-myristoyl glycine lipidation. Over Gly2–Leu97 the chain is Cytoplasmic. Ser34 bears the Phosphoserine mark. A helical membrane pass occupies residues Tyr98 to Phe118. The Lumenal portion of the chain corresponds to Pro119–Gln275. Residues Asn146, Asn152, Asn165, and Asn184 are each glycosylated (N-linked (GlcNAc...) asparagine). Cys215 and Cys254 are joined by a disulfide. The N-linked (GlcNAc...) asparagine glycan is linked to Asn257.

This sequence belongs to the TMEM106 family. Can form homomers. Interacts (via N-terminus) with MAP6 (via C-terminus). Interacts (via C-terminus) with the vacuolar-type ATPase subunit ATP6AP1. Interacts (via N-terminus) with AP2M1 and CLTC. Interacts with TMEM106C. Expressed in cortical neurons (at protein level).

The protein resides in the late endosome membrane. It localises to the lysosome membrane. Its subcellular location is the cell membrane. Its function is as follows. Involved in dendrite morphogenesis and maintenance by regulating lysosomal trafficking. May act as a molecular brake for retrograde transport of late endosomes/lysosomes, possibly via its interaction with MAP6. In neurons, may also play a role in the regulation of lysosomal size and responsiveness to stress. Required for proper lysosomal acidification. Functionally, in neurons, involved in the transport of late endosomes/lysosomes. May be involved in dendrite morphogenesis and maintenance by regulating lysosomal trafficking. May act as a molecular brake for retrograde transport of late endosomes/lysosomes, possibly via its interaction with MAP6. In motoneurons, may mediate the axonal transport of lysosomes and axonal sorting at the initial segment. It remains unclear whether TMEM106B affects the transport of moving lysosomes in the anterograde or retrograde direction in neurites and whether it is particularly important in the sorting of lysosomes in axons or in dendrites. In neurons, may also play a role in the regulation of lysosomal size and responsiveness to stress. Required for proper lysosomal acidification. The polypeptide is Transmembrane protein 106B (Tmem106b) (Rattus norvegicus (Rat)).